A 201-amino-acid polypeptide reads, in one-letter code: Small ribosomal subunit protein uS4c (201 aa).

One can recognise an S4 RNA-binding domain in the interval 89–149; sequence MRLDNILFRL…DKPKSGALIK (61 aa).

It belongs to the universal ribosomal protein uS4 family. Part of the 30S ribosomal subunit. Contacts protein S5. The interaction surface between S4 and S5 is involved in control of translational fidelity.

It localises to the plastid. In terms of biological role, one of the primary rRNA binding proteins, it binds directly to 16S rRNA where it nucleates assembly of the body of the 30S subunit. Its function is as follows. With S5 and S12 plays an important role in translational accuracy. This Cuscuta reflexa (Southern Asian dodder) protein is Small ribosomal subunit protein uS4c (rps4).